The primary structure comprises 1320 residues: Inner centromere protein A (1320 aa).

Disordered stretches follow at residues 53-75, 426-447, 611-679, 701-877, and 896-1215; these read KNSNYLNNNNNNNNNNNNNNNIS, QEKQQQQQEKQQEKQQQQQPVV, NEPI…VVPP, EEEE…NTAS, and TKSP…DGDE. Composition is skewed to low complexity over residues 54 to 75, 429 to 447, and 615 to 640; these read NSNYLNNNNNNNNNNNNNNNIS, QQQQQEKQQEKQQQQQPVV, and QQPSSSSSQLSSSQQPSSSSSSSSSS. Residues 221-444 adopt a coiled-coil conformation; sequence QQNQFQEQHK…KQQEKQQQQQ (224 aa). Polar residues predominate over residues 653–668; that stretch reads TIVTSKPTNKVQPQSL. Low complexity predominate over residues 669–679; sequence NSNINNNVVPP. Residues 683-855 are a coiled coil; sequence AAIANKLKKQ…QKKKTVQTIL (173 aa). Positions 701–835 are enriched in basic and acidic residues; it reads EEEERLRKKQ…QEKEKQEKQK (135 aa). A compositionally biased stretch (polar residues) spans 851–863; the sequence is VQTILPTPQTPSR. Residues 864–877 are compositionally biased toward low complexity; that stretch reads SANNNYDDAANTAS. 2 stretches are compositionally biased toward acidic residues: residues 908 to 926 and 934 to 951; these read DDQDDDDCEDYDGTDENSE and QDDSDQEIEEQFENDSDE. The segment covering 965–977 has biased composition (low complexity); the sequence is NKNKNSNNSNNNN. A compositionally biased stretch (basic and acidic residues) spans 981–1000; it reads QSRKDKSIVFDSDSLNRNHN. Low complexity-rich tracts occupy residues 1026–1040 and 1047–1061; these read SNMKNNNNNNTYSNS and SPPSSVSDYSPSSES. The segment covering 1062–1071 has biased composition (polar residues); sequence NDCFSPLTPT. The span at 1072 to 1096 shows a compositional bias: low complexity; it reads NNNKINNNKINNNNSNNNSFNNSNS. A compositionally biased stretch (polar residues) spans 1120-1136; that stretch reads SKTSPFLTIRNTPSPLK. The span at 1143–1154 shows a compositional bias: low complexity; the sequence is NMSSASSLSSFD. A compositionally biased stretch (acidic residues) spans 1155-1170; the sequence is SDNDSDYNDNDIDDGE. A compositionally biased stretch (polar residues) spans 1175 to 1187; sequence PNENFTTPLKNQE. Positions 1188–1198 are enriched in low complexity; that stretch reads NNNNNNSNNSN. Polar residues predominate over residues 1199–1209; sequence TQYPIITSPPS.

This sequence belongs to the INCENP family. Interacts with aurK.

It localises to the chromosome. It is found in the centromere. Its subcellular location is the cytoplasm. The protein localises to the cytoskeleton. The protein resides in the spindle. It localises to the nucleus. It is found in the cleavage furrow. In terms of biological role, chromosomal passenger protein that seems to be required for chromosome segregation and the onset of cytokinesis during mitosis. Plays a key role in the abscission of daughter cells at the end of cytokinesis and in the establishment or maintenance of a bipolar spindle. This is Inner centromere protein A (icpA) from Dictyostelium discoideum (Social amoeba).